The sequence spans 222 residues: UPF0441 protein CKO_04429 (222 aa).

Positions 177–194 (TVPKTAMAPKPATTTTVT) are enriched in low complexity. The segment at 177–222 (TVPKTAMAPKPATTTTVTRGGFGESVAKQSTMQRSATGTSNRSMGG) is disordered. Positions 203 to 222 (AKQSTMQRSATGTSNRSMGG) are enriched in polar residues.

It belongs to the UPF0441 family.

The sequence is that of UPF0441 protein CKO_04429 from Citrobacter koseri (strain ATCC BAA-895 / CDC 4225-83 / SGSC4696).